Reading from the N-terminus, the 71-residue chain is cAMP-dependent protein kinase inhibitor beta (71 aa).

Residues 1-21 (MTDVESVISSFASSARAGRRN) are disordered. Residue threonine 2 is modified to Blocked amino end (Thr). Serine 35 carries the phosphoserine modification. A disordered region spans residues 51–71 (AKMKNEEKDQGQPKKPLDEDK).

The protein belongs to the PKI family. Testis.

In terms of biological role, extremely potent competitive inhibitor of cAMP-dependent protein kinase activity, this protein interacts with the catalytic subunit of the enzyme after the cAMP-induced dissociation of its regulatory chains. The sequence is that of cAMP-dependent protein kinase inhibitor beta (Pkib) from Rattus norvegicus (Rat).